We begin with the raw amino-acid sequence, 699 residues long: DNA topoisomerase 1 (699 aa).

2 stretches are compositionally biased toward basic and acidic residues: residues 1-15 (MAKSKVVEKDKKNEL) and 22-35 (IELKGQSKNEESKG). Residues 1–37 (MAKSKVVEKDKKNELDNQSADIELKGQSKNEESKGGK) form a disordered region. The Toprim domain maps to 38 to 146 (KKVIIVESPA…NIITFTEITE (109 aa)). Mg(2+) is bound by residues glutamate 44 and aspartate 115. Positions 160 to 583 (DMNKVNAQLA…SFLKEFNKDL (424 aa)) constitute a Topo IA-type catalytic domain. Residues 194–199 (SAGRVQ) form an interaction with DNA region. The O-(5'-phospho-DNA)-tyrosine intermediate role is filled by tyrosine 324. A C4-type zinc finger spans residues 601 to 624 (CEDCSGNYKLKVGKYGLYLHCPNC). The segment at 649–699 (QESQEENGEKNSVQSEESSANSGNRKFYRKRRTSGSKKSSTKSASSKAKKK) is disordered. Over residues 661–672 (VQSEESSANSGN) the composition is skewed to polar residues. Residues 674-683 (KFYRKRRTSG) are compositionally biased toward basic residues. The segment covering 684–699 (SKKSSTKSASSKAKKK) has biased composition (low complexity).

The protein belongs to the type IA topoisomerase family. In terms of assembly, monomer. The cofactor is Mg(2+).

It carries out the reaction ATP-independent breakage of single-stranded DNA, followed by passage and rejoining.. Releases the supercoiling and torsional tension of DNA, which is introduced during the DNA replication and transcription, by transiently cleaving and rejoining one strand of the DNA duplex. Introduces a single-strand break via transesterification at a target site in duplex DNA. The scissile phosphodiester is attacked by the catalytic tyrosine of the enzyme, resulting in the formation of a DNA-(5'-phosphotyrosyl)-enzyme intermediate and the expulsion of a 3'-OH DNA strand. The free DNA strand then undergoes passage around the unbroken strand, thus removing DNA supercoils. Finally, in the religation step, the DNA 3'-OH attacks the covalent intermediate to expel the active-site tyrosine and restore the DNA phosphodiester backbone. In Fervidobacterium islandicum, this protein is DNA topoisomerase 1.